The following is a 343-amino-acid chain: Biotin synthase (343 aa).

In terms of domain architecture, Radical SAM core spans 36 to 254 (RQVQVSTLLS…IAVARIMMPR (219 aa)). Residues C51, C55, and C58 each contribute to the [4Fe-4S] cluster site. 4 residues coordinate [2Fe-2S] cluster: C95, C126, C186, and R258.

The protein belongs to the radical SAM superfamily. Biotin synthase family. Homodimer. [4Fe-4S] cluster serves as cofactor. The cofactor is [2Fe-2S] cluster.

It carries out the reaction (4R,5S)-dethiobiotin + (sulfur carrier)-SH + 2 reduced [2Fe-2S]-[ferredoxin] + 2 S-adenosyl-L-methionine = (sulfur carrier)-H + biotin + 2 5'-deoxyadenosine + 2 L-methionine + 2 oxidized [2Fe-2S]-[ferredoxin]. It participates in cofactor biosynthesis; biotin biosynthesis; biotin from 7,8-diaminononanoate: step 2/2. Functionally, catalyzes the conversion of dethiobiotin (DTB) to biotin by the insertion of a sulfur atom into dethiobiotin via a radical-based mechanism. The chain is Biotin synthase from Erwinia tasmaniensis (strain DSM 17950 / CFBP 7177 / CIP 109463 / NCPPB 4357 / Et1/99).